Consider the following 119-residue polypeptide: Autophagy-related protein 8 (119 aa).

A lipid anchor (Phosphatidylethanolamine amidated glycine) is attached at glycine 116. Positions 117–119 (EAL) are cleaved as a propeptide — removed in mature form.

This sequence belongs to the ATG8 family. In terms of assembly, conjugation to phosphatidylethanolamine (PE) leads to homodimerization. Interacts with ATG1, ATG3, ATG4, ATG7 and ATG12. The C-terminal Glu-117, Ala-118 and Leu-119 residues of ATG8 are removed by ATG4 to expose Gly-116 at the C-terminus. This Gly-116 forms then a thioester bond with ATG7 (E1-like activating enzyme) before being transferred to ATG3 (the specific E2 conjugating enzyme), in order to be finally amidated with phosphatidylethanolamine. This lipid modification anchors ATG8 to membranes and can be reversed by ATG4, releasing soluble ATG8.

It localises to the cytoplasmic vesicle. The protein localises to the cvt vesicle membrane. The protein resides in the autophagosome membrane. Its subcellular location is the vacuole membrane. In terms of biological role, ubiquitin-like modifier involved in cytoplasm to vacuole transport (Cvt) vesicles and autophagosome formation. With ATG4, mediates the delivery of the vesicles and autophagosomes to the vacuole via the microtubule cytoskeleton. Required for selective autophagic degradation of the nucleus (nucleophagy) as well as for mitophagy which contributes to regulate mitochondrial quantity and quality by eliminating the mitochondria to a basal level to fulfill cellular energy requirements and preventing excess ROS production. Also participates in membrane fusion events that take place in the early secretory pathway. Also involved in endoplasmic reticulum-specific autophagic process and is essential for the survival of cells subjected to severe ER stress. The ATG8-PE conjugate mediates tethering between adjacent membranes and stimulates membrane hemifusion, leading to expansion of the autophagosomal membrane during autophagy. Moreover not only conjugation, but also subsequent ATG8-PE deconjugation is an important step required to facilitate multiple events during macroautophagy, and especially for efficient autophagosome biogenesis, the assembly of ATG9-containing tubulovesicular clusters into phagophores/autophagosomes, and for the disassembly of PAS-associated ATG components. Autophagy is required for conidiation, aerial mycelial growth, and pseudothecia formation, but not for host invasion. The chain is Autophagy-related protein 8 from Cochliobolus heterostrophus (strain C4 / ATCC 48331 / race T) (Southern corn leaf blight fungus).